A 201-amino-acid polypeptide reads, in one-letter code: Dermatopontin (201 aa).

The first 18 residues, 1–18, serve as a signal peptide directing secretion; the sequence is MDLTLLWVLLPLVTVAWG. At Q19 the chain carries Pyrrolidone carboxylic acid. Y23 bears the Sulfotyrosine mark. 4 repeat units span residues 26 to 79, 70 to 75, 80 to 135, and 125 to 130. Residues 26–135 form a 2 X 53-55 AA tandem repeats region; it reads SYHQYHDYSD…REWQFYCCRY (110 aa). 5 cysteine pairs are disulfide-bonded: C50-C77, C90-C132, C106-C133, C139-C196, and C143-C189. The segment at 70–186 is 3 X 6 AA tandem repeats of D-R-[EQ]-W-[NQK]-[FY]; the sequence is DRQWNYACMP…AVERDRQWKF (117 aa). A sulfotyrosine mark is found at Y162, Y164, Y166, and Y167. Residues 181 to 186 form a 2-3 repeat; the sequence is DRQWKF. Y194 is subject to Sulfotyrosine.

This sequence belongs to the dermatopontin family. As to quaternary structure, interacts with TGFB1, DCN and collagen. In terms of processing, sulfated on tyrosine residue(s). As to expression, expressed in skeletal muscle, heart, pancreas, skin and cultured fibroblasts.

The protein localises to the secreted. Its subcellular location is the extracellular space. The protein resides in the extracellular matrix. In terms of biological role, seems to mediate adhesion by cell surface integrin binding. May serve as a communication link between the dermal fibroblast cell surface and its extracellular matrix environment. Enhances TGFB1 activity. Inhibits cell proliferation. Accelerates collagen fibril formation, and stabilizes collagen fibrils against low-temperature dissociation. The protein is Dermatopontin (DPT) of Bos taurus (Bovine).